The primary structure comprises 437 residues: Glutamate-1-semialdehyde 2,1-aminomutase (437 aa).

Residue Lys-274 is modified to N6-(pyridoxal phosphate)lysine.

Belongs to the class-III pyridoxal-phosphate-dependent aminotransferase family. HemL subfamily. As to quaternary structure, homodimer. Requires pyridoxal 5'-phosphate as cofactor.

The protein resides in the cytoplasm. The enzyme catalyses (S)-4-amino-5-oxopentanoate = 5-aminolevulinate. The protein operates within porphyrin-containing compound metabolism; protoporphyrin-IX biosynthesis; 5-aminolevulinate from L-glutamyl-tRNA(Glu): step 2/2. The polypeptide is Glutamate-1-semialdehyde 2,1-aminomutase (Leptothrix cholodnii (strain ATCC 51168 / LMG 8142 / SP-6) (Leptothrix discophora (strain SP-6))).